The following is a 330-amino-acid chain: MEAVAKFDFTASGEDELSFHTGDVLKILSNQEEWFKAELGSQEGYVPKNFIDIQFPKWFHEGLSRHQAENLLMGKEVGFFIIRASQSSPGDFSISVRHEDDVQHFKVMRDNKGNYFLWTEKFPSLNKLVDYYRTNSISRQKQIFLRDRTREDQGHRGNSLDRRSQGGPHLSGAVGEEIRPSMNRKLSDHPPTLPLQQHQHQPQPPQYAPAPQQLQQPPQQRYLQHHHFHQERRGGSLDINDGHCGTGLGSEMNAALMHRRHTDPVQLQAAGRVRWARALYDFEALEDDELGFHSGEVVEVLDSSNPSWWTGRLHNKLGLFPANYVAPMTR.

The SH3 1 domain occupies 1-56; that stretch reads MEAVAKFDFTASGEDELSFHTGDVLKILSNQEEWFKAELGSQEGYVPKNFIDIQFP. Tyrosine 45 bears the Phosphotyrosine mark. In terms of domain architecture, SH2 spans 58–149; it reads WFHEGLSRHQ…QKQIFLRDRT (92 aa). An N6-acetyllysine modification is found at lysine 106. Residues 143 to 244 form a disordered region; that stretch reads IFLRDRTRED…GSLDINDGHC (102 aa). Positions 144 to 164 are enriched in basic and acidic residues; sequence FLRDRTREDQGHRGNSLDRRS. Serine 187 is modified (phosphoserine). Low complexity predominate over residues 209-222; the sequence is PAPQQLQQPPQQRY. At serine 236 the chain carries Phosphoserine. Threonine 262 is subject to Phosphothreonine. The SH3 2 domain maps to 271-330; the sequence is GRVRWARALYDFEALEDDELGFHSGEVVEVLDSSNPSWWTGRLHNKLGLFPANYVAPMTR.

The protein belongs to the GRB2/sem-5/DRK family. In terms of assembly, interacts with phosphorylated LIME1 upon TCR activation. Interacts with phosphorylated LAT and LAX1 upon TCR activation. Interacts with SHB. Interacts with PTPN23.

The protein resides in the nucleus. It is found in the cytoplasm. Its subcellular location is the endosome. Functionally, interacts with SLP-76 to regulate NF-AT activation. Binds to tyrosine-phosphorylated shc. The sequence is that of GRB2-related adapter protein 2 (GRAP2) from Homo sapiens (Human).